A 97-amino-acid polypeptide reads, in one-letter code: Ferredoxin-thioredoxin reductase, variable chain (97 aa).

Belongs to the ferredoxin thioredoxin reductase alpha subunit family. Heterodimer of subunit A (variable subunit) and subunit B (catalytic subunit). Heterodimeric FTR forms a complex with ferredoxin and thioredoxin.

The protein resides in the plastid. It localises to the chloroplast. In terms of biological role, variable subunit of the ferredoxin-thioredoxin reductase (FTR), which catalyzes the two-electron reduction of thioredoxins by the electrons provided by reduced ferredoxin. The chain is Ferredoxin-thioredoxin reductase, variable chain from Zea mays (Maize).